A 440-amino-acid polypeptide reads, in one-letter code: Xylose isomerase (440 aa).

Active-site residues include histidine 101 and aspartate 104. Mg(2+)-binding residues include glutamate 232, glutamate 268, histidine 271, aspartate 296, aspartate 307, aspartate 309, and aspartate 339.

Belongs to the xylose isomerase family. Homotetramer. Mg(2+) is required as a cofactor.

It is found in the cytoplasm. It catalyses the reaction alpha-D-xylose = alpha-D-xylulofuranose. The protein is Xylose isomerase of Cronobacter sakazakii (strain ATCC BAA-894) (Enterobacter sakazakii).